A 157-amino-acid chain; its full sequence is SsrA-binding protein (157 aa).

It belongs to the SmpB family.

The protein localises to the cytoplasm. Required for rescue of stalled ribosomes mediated by trans-translation. Binds to transfer-messenger RNA (tmRNA), required for stable association of tmRNA with ribosomes. tmRNA and SmpB together mimic tRNA shape, replacing the anticodon stem-loop with SmpB. tmRNA is encoded by the ssrA gene; the 2 termini fold to resemble tRNA(Ala) and it encodes a 'tag peptide', a short internal open reading frame. During trans-translation Ala-aminoacylated tmRNA acts like a tRNA, entering the A-site of stalled ribosomes, displacing the stalled mRNA. The ribosome then switches to translate the ORF on the tmRNA; the nascent peptide is terminated with the 'tag peptide' encoded by the tmRNA and targeted for degradation. The ribosome is freed to recommence translation, which seems to be the essential function of trans-translation. The polypeptide is SsrA-binding protein (Limosilactobacillus reuteri (strain DSM 20016) (Lactobacillus reuteri)).